The chain runs to 526 residues: 1,4-beta-D-glucan cellobiohydrolase B (526 aa).

An N-terminal signal peptide occupies residues 1–23 (MASSFQLYKALLFFSSLLSAVQA). The tract at residues 24 to 458 (QKVGTQQAEV…SNIKFGPIGS (435 aa)) is catalytic. E235 serves as the catalytic Nucleophile. E240 (proton donor) is an active-site residue. N-linked (GlcNAc...) asparagine glycosylation is found at N293 and N400. The interval 459–490 (TFGNGGGSGPTTTVTTSTATSTTSSATSTATG) is ser/Thr-rich linker. Residues 464–488 (GGSGPTTTVTTSTATSTTSSATSTA) are disordered. Low complexity predominate over residues 468–488 (PTTTVTTSTATSTTSSATSTA). A CBM1 domain is found at 490-526 (GQAQHWEQCGGNGWTGPTVCASPWACTVVNSWYSQCL). Intrachain disulfides connect C498–C515 and C509–C525.

It belongs to the glycosyl hydrolase 7 (cellulase C) family.

It is found in the secreted. It catalyses the reaction Hydrolysis of (1-&gt;4)-beta-D-glucosidic linkages in cellulose and cellotetraose, releasing cellobiose from the non-reducing ends of the chains.. Functionally, the biological conversion of cellulose to glucose generally requires three types of hydrolytic enzymes: (1) Endoglucanases which cut internal beta-1,4-glucosidic bonds; (2) Exocellobiohydrolases that cut the disaccharide cellobiose from the non-reducing end of the cellulose polymer chain; (3) Beta-1,4-glucosidases which hydrolyze the cellobiose and other short cello-oligosaccharides to glucose. This is 1,4-beta-D-glucan cellobiohydrolase B (cbhB) from Emericella nidulans (strain FGSC A4 / ATCC 38163 / CBS 112.46 / NRRL 194 / M139) (Aspergillus nidulans).